A 511-amino-acid chain; its full sequence is Ectonucleoside triphosphate diphosphohydrolase 1 (511 aa).

At 1–16 the chain is on the cytoplasmic side; it reads MEDIKDSKVKRFCSKN. Residues 17–37 form a helical membrane-spanning segment; that stretch reads ILIILGFSSVLAVIALIAVGL. Topologically, residues 38 to 478 are extracellular; sequence THNKPLPENV…LSPPLPHSTY (441 aa). An N-terminal lobe region spans residues 46 to 171; it reads NVKYGIVLDA…DFQGAKIITG (126 aa). N-linked (GlcNAc...) asparagine glycosylation is present at Asn73. A disulfide bridge connects residues Cys84 and Cys108. The Proton acceptor role is filled by Glu174. The C-terminal lobe stretch occupies residues 205–441; the sequence is QATFGALDLG…GTSWDQIHFM (237 aa). N-linked (GlcNAc...) asparagine glycans are attached at residues Asn226, Asn291, and Asn333. 2 disulfide bridges follow: Cys254–Cys300 and Cys281–Cys324. Residues Cys337 and Cys342 are joined by a disulfide bond. N-linked (GlcNAc...) asparagine glycosylation is present at Asn374. An intrachain disulfide couples Cys391 to Cys414. Asn429 and Asn458 each carry an N-linked (GlcNAc...) asparagine glycan. Residues 479-499 form a helical membrane-spanning segment; it reads ISLMVLFSLVLVAMVITGLFI. Residues 500–511 lie on the Cytoplasmic side of the membrane; that stretch reads FSKPSYFWKEAV.

Belongs to the GDA1/CD39 NTPase family. Homodimer; disulfide-linked. Ca(2+) serves as cofactor. The cofactor is Mg(2+). N-glycosylated. Post-translationally, the N-terminus is blocked. In terms of processing, palmitoylated on Cys-13; which is required for caveola targeting. As to expression, expressed in primary neurons and astrocytes, kidney, liver, muscle, thymus, lung and spleen.

The protein resides in the membrane. It is found in the caveola. The enzyme catalyses a ribonucleoside 5'-triphosphate + 2 H2O = a ribonucleoside 5'-phosphate + 2 phosphate + 2 H(+). It catalyses the reaction a ribonucleoside 5'-triphosphate + H2O = a ribonucleoside 5'-diphosphate + phosphate + H(+). It carries out the reaction a ribonucleoside 5'-diphosphate + H2O = a ribonucleoside 5'-phosphate + phosphate + H(+). The catalysed reaction is ATP + 2 H2O = AMP + 2 phosphate + 2 H(+). The enzyme catalyses ATP + H2O = ADP + phosphate + H(+). It catalyses the reaction ADP + H2O = AMP + phosphate + H(+). It carries out the reaction CTP + 2 H2O = CMP + 2 phosphate + 2 H(+). The catalysed reaction is CTP + H2O = CDP + phosphate + H(+). The enzyme catalyses CDP + H2O = CMP + phosphate + H(+). It catalyses the reaction GTP + 2 H2O = GMP + 2 phosphate + 2 H(+). It carries out the reaction GTP + H2O = GDP + phosphate + H(+). The catalysed reaction is GDP + H2O = GMP + phosphate + H(+). The enzyme catalyses ITP + 2 H2O = IMP + 2 phosphate + 2 H(+). It catalyses the reaction ITP + H2O = IDP + phosphate + H(+). It carries out the reaction IDP + H2O = IMP + phosphate + H(+). The catalysed reaction is UTP + 2 H2O = UMP + 2 phosphate + 2 H(+). The enzyme catalyses UTP + H2O = UDP + phosphate + H(+). It catalyses the reaction UDP + H2O = UMP + phosphate + H(+). In terms of biological role, catalyzes the hydrolysis of both di- and triphosphate nucleotides (NDPs and NTPs) and hydrolyze NTPs to nucleotide monophosphates (NMPs) in two distinct successive phosphate-releasing steps, with NDPs as intermediates and participates in the regulation of extracellular levels of nucleotides. By hydrolyzing proinflammatory ATP and platelet-activating ADP to AMP, it blocks platelet aggregation and supports blood flow. This is Ectonucleoside triphosphate diphosphohydrolase 1 from Rattus norvegicus (Rat).